A 55-amino-acid chain; its full sequence is U17-myrmicitoxin-Mri1b (55 aa).

Residues 1 to 31 form the signal peptide; sequence MENSRTSTFTAYVTVAFLLISTFVTMVVTES. Gln32 carries the pyrrolidone carboxylic acid modification.

Contains 1 disulfide bond. Expressed by the venom gland.

The protein localises to the secreted. This is U17-myrmicitoxin-Mri1b from Manica rubida (European giant red ant).